Reading from the N-terminus, the 252-residue chain is Clc-like protein 2 (252 aa).

4 helical membrane-spanning segments follow: residues 7–29, 91–111, 127–147, and 173–193; these read YAIL…TPAW, LFHI…SFCV, VFLV…AVYS, and IALT…VHVL.

Belongs to the Clc family.

It localises to the membrane. The polypeptide is Clc-like protein 2 (clc-2) (Caenorhabditis elegans).